A 155-amino-acid chain; its full sequence is Ribonuclease H (155 aa).

In terms of domain architecture, RNase H type-1 spans 9-150 (DGQQVEMWTD…ADALANQGME (142 aa)). The Mg(2+) site is built by Asp18, Glu56, Asp78, and Asp142.

It belongs to the RNase H family. In terms of assembly, monomer. The cofactor is Mg(2+).

It is found in the cytoplasm. It carries out the reaction Endonucleolytic cleavage to 5'-phosphomonoester.. Endonuclease that specifically degrades the RNA of RNA-DNA hybrids. In Bordetella pertussis (strain Tohama I / ATCC BAA-589 / NCTC 13251), this protein is Ribonuclease H.